The following is a 279-amino-acid chain: DegV domain-containing protein SpyM3_1149 (279 aa).

The DegV domain occupies 4–278; it reads IKIVTDSSIT…EGAFAVMVRY (275 aa). Hexadecanoate-binding residues include Thr-62 and Ser-95.

May bind long-chain fatty acids, such as palmitate, and may play a role in lipid transport or fatty acid metabolism. This chain is DegV domain-containing protein SpyM3_1149, found in Streptococcus pyogenes serotype M3 (strain ATCC BAA-595 / MGAS315).